Here is a 72-residue protein sequence, read N- to C-terminus: DNA gyrase inhibitor YacG (72 aa).

Residues Cys14, Cys17, Cys33, and Cys37 each coordinate Zn(2+).

The protein belongs to the DNA gyrase inhibitor YacG family. Interacts with GyrB. Requires Zn(2+) as cofactor.

Inhibits all the catalytic activities of DNA gyrase by preventing its interaction with DNA. Acts by binding directly to the C-terminal domain of GyrB, which probably disrupts DNA binding by the gyrase. The chain is DNA gyrase inhibitor YacG from Mannheimia succiniciproducens (strain KCTC 0769BP / MBEL55E).